We begin with the raw amino-acid sequence, 175 residues long: MLTSGTILLAGSLLSPNPGLIFWTAITFVIVLLILKKIAWGPIIGALEEREKGIQSSIDRAEKAKDEAEAILRKNRELLSKADAESEKIVREGKEYAEKLRTDITEKAHTEAAKMIASAKEEIEQEKRRALDVLRNEVADLAVLGAERIIRESLNADMQKKVVASMIQDMSSKRN.

The helical transmembrane segment at 20-40 (LIFWTAITFVIVLLILKKIAW) threads the bilayer.

Belongs to the ATPase B chain family. In terms of assembly, F-type ATPases have 2 components, F(1) - the catalytic core - and F(0) - the membrane proton channel. F(1) has five subunits: alpha(3), beta(3), gamma(1), delta(1), epsilon(1). F(0) has four main subunits: a(1), b(2) and c(10-14). The alpha and beta chains form an alternating ring which encloses part of the gamma chain. F(1) is attached to F(0) by a central stalk formed by the gamma and epsilon chains, while a peripheral stalk is formed by the delta and b chains.

The protein localises to the cell inner membrane. Its function is as follows. F(1)F(0) ATP synthase produces ATP from ADP in the presence of a proton or sodium gradient. F-type ATPases consist of two structural domains, F(1) containing the extramembraneous catalytic core and F(0) containing the membrane proton channel, linked together by a central stalk and a peripheral stalk. During catalysis, ATP synthesis in the catalytic domain of F(1) is coupled via a rotary mechanism of the central stalk subunits to proton translocation. Functionally, component of the F(0) channel, it forms part of the peripheral stalk, linking F(1) to F(0). In Chlorobium chlorochromatii (strain CaD3), this protein is ATP synthase subunit b.